The following is a 344-amino-acid chain: Ferrochelatase (344 aa).

Fe cation contacts are provided by His-214 and Glu-295.

The protein belongs to the ferrochelatase family.

Its subcellular location is the cytoplasm. The catalysed reaction is heme b + 2 H(+) = protoporphyrin IX + Fe(2+). It functions in the pathway porphyrin-containing compound metabolism; protoheme biosynthesis; protoheme from protoporphyrin-IX: step 1/1. In terms of biological role, catalyzes the ferrous insertion into protoporphyrin IX. The polypeptide is Ferrochelatase (Agrobacterium fabrum (strain C58 / ATCC 33970) (Agrobacterium tumefaciens (strain C58))).